The primary structure comprises 179 residues: Large ribosomal subunit protein uL5 (179 aa).

Belongs to the universal ribosomal protein uL5 family. As to quaternary structure, part of the 50S ribosomal subunit; part of the 5S rRNA/L5/L18/L25 subcomplex. Contacts the 5S rRNA and the P site tRNA. Forms a bridge to the 30S subunit in the 70S ribosome.

Functionally, this is one of the proteins that bind and probably mediate the attachment of the 5S RNA into the large ribosomal subunit, where it forms part of the central protuberance. In the 70S ribosome it contacts protein S13 of the 30S subunit (bridge B1b), connecting the 2 subunits; this bridge is implicated in subunit movement. Contacts the P site tRNA; the 5S rRNA and some of its associated proteins might help stabilize positioning of ribosome-bound tRNAs. The protein is Large ribosomal subunit protein uL5 of Tolumonas auensis (strain DSM 9187 / NBRC 110442 / TA 4).